Here is a 361-residue protein sequence, read N- to C-terminus: Peptide chain release factor 1 (361 aa).

N5-methylglutamine is present on Q237. Residues 285-306 (QAEQSAQQTEQRRQLVGSGDRS) are disordered.

This sequence belongs to the prokaryotic/mitochondrial release factor family. Post-translationally, methylated by PrmC. Methylation increases the termination efficiency of RF1.

It is found in the cytoplasm. Functionally, peptide chain release factor 1 directs the termination of translation in response to the peptide chain termination codons UAG and UAA. The chain is Peptide chain release factor 1 from Alkalilimnicola ehrlichii (strain ATCC BAA-1101 / DSM 17681 / MLHE-1).